We begin with the raw amino-acid sequence, 163 residues long: NAD(P)H-quinone oxidoreductase subunit I, chloroplastic (163 aa).

4Fe-4S ferredoxin-type domains are found at residues Gly-55–Lys-84 and Leu-95–Glu-124. 8 residues coordinate [4Fe-4S] cluster: Cys-64, Cys-67, Cys-70, Cys-74, Cys-104, Cys-107, Cys-110, and Cys-114.

It belongs to the complex I 23 kDa subunit family. NDH is composed of at least 16 different subunits, 5 of which are encoded in the nucleus. It depends on [4Fe-4S] cluster as a cofactor.

The protein resides in the plastid. It localises to the chloroplast thylakoid membrane. The enzyme catalyses a plastoquinone + NADH + (n+1) H(+)(in) = a plastoquinol + NAD(+) + n H(+)(out). The catalysed reaction is a plastoquinone + NADPH + (n+1) H(+)(in) = a plastoquinol + NADP(+) + n H(+)(out). NDH shuttles electrons from NAD(P)H:plastoquinone, via FMN and iron-sulfur (Fe-S) centers, to quinones in the photosynthetic chain and possibly in a chloroplast respiratory chain. The immediate electron acceptor for the enzyme in this species is believed to be plastoquinone. Couples the redox reaction to proton translocation, and thus conserves the redox energy in a proton gradient. This is NAD(P)H-quinone oxidoreductase subunit I, chloroplastic from Glycine max (Soybean).